The chain runs to 291 residues: Small ribosomal subunit biogenesis GTPase RsgA (291 aa).

The region spanning 63–221 (HNELKRPPVS…IADTPGFSAL (159 aa)) is the CP-type G domain. Residues 112–115 (TKKD) and 164–172 (GQSGVGKST) each bind GTP. Residues cysteine 245, cysteine 250, histidine 252, and cysteine 258 each coordinate Zn(2+).

This sequence belongs to the TRAFAC class YlqF/YawG GTPase family. RsgA subfamily. In terms of assembly, monomer. Associates with 30S ribosomal subunit, binds 16S rRNA. Zn(2+) is required as a cofactor.

Its subcellular location is the cytoplasm. Functionally, one of several proteins that assist in the late maturation steps of the functional core of the 30S ribosomal subunit. Helps release RbfA from mature subunits. May play a role in the assembly of ribosomal proteins into the subunit. Circularly permuted GTPase that catalyzes slow GTP hydrolysis, GTPase activity is stimulated by the 30S ribosomal subunit. This chain is Small ribosomal subunit biogenesis GTPase RsgA, found in Staphylococcus haemolyticus (strain JCSC1435).